A 2710-amino-acid polypeptide reads, in one-letter code: Serine/threonine-protein kinase ATR (2710 aa).

The region spanning 1647–2257 (TLAKASFRCQ…LWMMAAVSKS (611 aa)) is the FAT domain. Residues 2368-2680 (IADDAEILNS…GVNAAPSLPL (313 aa)) form the PI3K/PI4K catalytic domain. The interval 2374 to 2380 (ILNSLQK) is G-loop. Positions 2545 to 2553 (GLGDRHGEN) are catalytic loop. The activation loop stretch occupies residues 2565-2589 (HVDFSCLFDKGLLLEKPEVVPFRFT). The FATC domain occupies 2678 to 2710 (LPLSVEGQARRLIAEAVSHSNLGKMYVWWMAWF).

This sequence belongs to the PI3/PI4-kinase family. ATM subfamily.

It is found in the nucleus. It carries out the reaction L-seryl-[protein] + ATP = O-phospho-L-seryl-[protein] + ADP + H(+). The enzyme catalyses L-threonyl-[protein] + ATP = O-phospho-L-threonyl-[protein] + ADP + H(+). In terms of biological role, probable serine/threonine kinase. Seems to play a central role in cell-cycle regulation by transmitting DNA damage signals to downstream effectors of cell-cycle progression. May recognize the substrate consensus sequence [ST]-Q and phosphorylate histone variant H2AX to form H2AXS139ph at sites of DNA damage, thereby regulating DNA damage response mechanism. The sequence is that of Serine/threonine-protein kinase ATR from Oryza sativa subsp. japonica (Rice).